The following is a 904-amino-acid chain: Exo-beta-D-glucosaminidase (904 aa).

The first 32 residues, 1 to 32, serve as a signal peptide directing secretion; it reads MFHRPASVRRFVTTAVALGLLSTLSTGARAGA. Residues 28-49 are disordered; that stretch reads ARAGARTHEPPPRPTTVSSTAG. The Proton donor role is filled by Asp476. Residue Glu545 is the Nucleophile of the active site. Positions 813–828 are enriched in low complexity; sequence STTAGTDGASTTTVTV. Residues 813 to 833 are disordered; that stretch reads STTAGTDGASTTTVTVRNTGS.

The protein belongs to the glycosyl hydrolase 2 family. Monomer.

The protein localises to the secreted. It carries out the reaction Hydrolysis of chitosan or chitosan oligosaccharides to remove successive D-glucosamine residues from the non-reducing termini.. Functionally, hydrolyzes chitosan and chitooligosaccharides with retention of anomeric configuration. Has no beta-mannosidase activity. This chain is Exo-beta-D-glucosaminidase, found in Streptomyces avermitilis (strain ATCC 31267 / DSM 46492 / JCM 5070 / NBRC 14893 / NCIMB 12804 / NRRL 8165 / MA-4680).